Consider the following 990-residue polypeptide: MIFSAITADLDNTALAARFGAGPRLYDPVLAAERWAGWLADLAPEQADAIAALGNAFPDLQIALQSIAEASPYLFDLIRGDPVRLLRVLRGAPEQRLAKLLEDAETFVAAASAEDEVMAALRRLKAEAALLIALCDIGGIWPVMQVTQALTDLAGRSVQMALRFLLRQEAGRGRIVPPNPDCPEQGSGLIVLAMGKMGAGELNYSSDIDLIVFYELDAPTLAPDIEPQPFFVRVTQGLSRILQQRRGDGYVFRVDLRLRPDPASTPVALSTVSALDYYEREGRTWERAAMIKARPCAGDLVAGDALLSEIAPFVWRKHLDFAALSDVHDMKRQMQTYRGQTEIAVEGHNVKVGRGGIREIEFFAQTQQLIAGGRHPELRVRPTLEALEILAARNWITLQARDELTEAYLFLRKVEHRVQMIADEQTHALPDTVEAIEQFSRFLGYDSRDSFARDLLGYLERVQGHYAKLFEGDPTGTAKLPPVDYGAGPEDTRLLDHLLSLGYKKPLMIATTLQQWMTGGYRVLKVETTQRAFREFVPALIEELARAEQPDDAVNAFDRLLQALHRGGRLISLLSQNRELLTLVALVLGAAPRLGDMLARQPQILDGLIDPRFFGAMPDQAELSARLAVTLADAGSYEEFLDRLRLFGQESLFLIGTRILSGTVPTQQAAVAFADVAEGIVGTVHGLVSEQFASTYGRVKGQQTAILAMGKLGSREMTASSDLDLILIYDFDDDQPDSDGERSLHGAQYFARFTQRLISAFTTRTNYGVLYDVDMRLRPSGRAGPVASRLDAFAAYQEQEAWTWEHLALTRARVISAPPEFRSRIEQVIRAVLTRQRDAAIIANDVAEMRRAIAQEKGEDDVWDLKYAAGGMVDIDFIAQYLQLVHAHEAPDILHVNTLSALDNATRLGLLAQADAEVLRPAARLYQNLTQILRLCVSEKFNPDTAGDDLLRVMVRAGDAPDFSSLQARVKETQSDVRAIFSRLIGGEDA.

The interval 1–474 (MIFSAITADL…HYAKLFEGDP (474 aa)) is adenylyl removase. An adenylyl transferase region spans residues 478–990 (AKLPPVDYGA…FSRLIGGEDA (513 aa)).

Belongs to the GlnE family. Requires Mg(2+) as cofactor.

The catalysed reaction is [glutamine synthetase]-O(4)-(5'-adenylyl)-L-tyrosine + phosphate = [glutamine synthetase]-L-tyrosine + ADP. The enzyme catalyses [glutamine synthetase]-L-tyrosine + ATP = [glutamine synthetase]-O(4)-(5'-adenylyl)-L-tyrosine + diphosphate. Functionally, involved in the regulation of glutamine synthetase GlnA, a key enzyme in the process to assimilate ammonia. When cellular nitrogen levels are high, the C-terminal adenylyl transferase (AT) inactivates GlnA by covalent transfer of an adenylyl group from ATP to specific tyrosine residue of GlnA, thus reducing its activity. Conversely, when nitrogen levels are low, the N-terminal adenylyl removase (AR) activates GlnA by removing the adenylyl group by phosphorolysis, increasing its activity. The regulatory region of GlnE binds the signal transduction protein PII (GlnB) which indicates the nitrogen status of the cell. The polypeptide is Bifunctional glutamine synthetase adenylyltransferase/adenylyl-removing enzyme (Rhodopseudomonas palustris (strain ATCC BAA-98 / CGA009)).